Here is a 425-residue protein sequence, read N- to C-terminus: D-amino acid dehydrogenase 2 (425 aa).

3–17 serves as a coordination point for FAD; the sequence is ITVVGAGIVGISTAY.

Belongs to the DadA oxidoreductase family. FAD serves as cofactor.

It catalyses the reaction a D-alpha-amino acid + A + H2O = a 2-oxocarboxylate + AH2 + NH4(+). In terms of biological role, oxidative deamination of D-amino acids. The protein is D-amino acid dehydrogenase 2 (dadA2) of Ralstonia nicotianae (strain ATCC BAA-1114 / GMI1000) (Ralstonia solanacearum).